Here is a 445-residue protein sequence, read N- to C-terminus: Polyadenylate-binding protein RBP47A (445 aa).

Residues Met1 to Ser12 show a composition bias toward polar residues. 2 disordered regions span residues Met1–Gln45 and Ala93–Asp117. Pro residues predominate over residues Thr22–Gln35. 2 stretches are compositionally biased toward low complexity: residues Gln36–Gln45 and Ala93–Gln108. RRM domains follow at residues Lys119–Phe199, Leu213–Pro292, and Ser327–Ser399.

Belongs to the polyadenylate-binding RBP47 family. Interacts with the poly(A) tail of mRNA in nucleus. As to expression, expressed in leaves, stems, flowers, and seedlings.

The protein localises to the nucleus. It is found in the cytoplasmic granule. Heterogeneous nuclear ribonucleoprotein (hnRNP)-protein binding the poly(A) tail of mRNA and probably involved in some steps of pre-mRNA maturation. This chain is Polyadenylate-binding protein RBP47A (RBP47A), found in Arabidopsis thaliana (Mouse-ear cress).